Reading from the N-terminus, the 372-residue chain is Queuine tRNA-ribosyltransferase (372 aa).

The active-site Proton acceptor is D92. Substrate is bound by residues 92 to 96 (DSGGY), D146, Q188, and G215. The segment at 246-252 (GIGSLKE) is RNA binding. D265 functions as the Nucleophile in the catalytic mechanism. The tract at residues 270–274 (TRLGR) is RNA binding; important for wobble base 34 recognition. 4 residues coordinate Zn(2+): C303, C305, C308, and H334.

It belongs to the queuine tRNA-ribosyltransferase family. In terms of assembly, homodimer. Within each dimer, one monomer is responsible for RNA recognition and catalysis, while the other monomer binds to the replacement base PreQ1. Requires Zn(2+) as cofactor.

It carries out the reaction 7-aminomethyl-7-carbaguanine + guanosine(34) in tRNA = 7-aminomethyl-7-carbaguanosine(34) in tRNA + guanine. Its pathway is tRNA modification; tRNA-queuosine biosynthesis. In terms of biological role, catalyzes the base-exchange of a guanine (G) residue with the queuine precursor 7-aminomethyl-7-deazaguanine (PreQ1) at position 34 (anticodon wobble position) in tRNAs with GU(N) anticodons (tRNA-Asp, -Asn, -His and -Tyr). Catalysis occurs through a double-displacement mechanism. The nucleophile active site attacks the C1' of nucleotide 34 to detach the guanine base from the RNA, forming a covalent enzyme-RNA intermediate. The proton acceptor active site deprotonates the incoming PreQ1, allowing a nucleophilic attack on the C1' of the ribose to form the product. After dissociation, two additional enzymatic reactions on the tRNA convert PreQ1 to queuine (Q), resulting in the hypermodified nucleoside queuosine (7-(((4,5-cis-dihydroxy-2-cyclopenten-1-yl)amino)methyl)-7-deazaguanosine). The chain is Queuine tRNA-ribosyltransferase from Prochlorococcus marinus (strain MIT 9515).